Consider the following 203-residue polypeptide: A-type ATP synthase subunit E (203 aa).

It belongs to the V-ATPase E subunit family. In terms of assembly, has multiple subunits with at least A(3), B(3), C, D, E, F, H, I and proteolipid K(x).

The protein resides in the cell membrane. Functionally, component of the A-type ATP synthase that produces ATP from ADP in the presence of a proton gradient across the membrane. This is A-type ATP synthase subunit E from Desulfurococcus sp. (strain SY).